Consider the following 210-residue polypeptide: Proteasome subunit beta (210 aa).

The propeptide at 1–9 (MDNDKYLKG) is removed in mature form; by autocatalysis. The active-site Nucleophile is the T10.

This sequence belongs to the peptidase T1B family. The 20S proteasome core is composed of 14 alpha and 14 beta subunits that assemble into four stacked heptameric rings, resulting in a barrel-shaped structure. The two inner rings, each composed of seven catalytic beta subunits, are sandwiched by two outer rings, each composed of seven alpha subunits. The catalytic chamber with the active sites is on the inside of the barrel. Has a gated structure, the ends of the cylinder being occluded by the N-termini of the alpha-subunits. Is capped at one or both ends by the proteasome regulatory ATPase, PAN.

The protein resides in the cytoplasm. It catalyses the reaction Cleavage of peptide bonds with very broad specificity.. The formation of the proteasomal ATPase PAN-20S proteasome complex, via the docking of the C-termini of PAN into the intersubunit pockets in the alpha-rings, triggers opening of the gate for substrate entry. Interconversion between the open-gate and close-gate conformations leads to a dynamic regulation of the 20S proteasome proteolysis activity. Component of the proteasome core, a large protease complex with broad specificity involved in protein degradation. The chain is Proteasome subunit beta from Methanosarcina mazei (strain ATCC BAA-159 / DSM 3647 / Goe1 / Go1 / JCM 11833 / OCM 88) (Methanosarcina frisia).